The chain runs to 471 residues: Desmin (471 aa).

Residues 2-109 (SQAYSSSQRV…QEFLTTRTNE (108 aa)) form a head region. Residue serine 7 is modified to Phosphoserine; by CDK1. Serine 12 is modified (phosphoserine; by AURKB). Arginine 16 bears the Omega-N-methylarginine mark. A Phosphothreonine; by AURKB and ROCK1 modification is found at threonine 17. Serine 28 is subject to Phosphoserine; by CDK1. The residue at position 31 (serine 31) is a Phosphoserine. A Phosphoserine; by CDK1 modification is found at serine 32. The residue at position 37 (arginine 37) is an Asymmetric dimethylarginine; alternate. Arginine 37 is subject to Omega-N-methylarginine; alternate. Position 45 is a phosphoserine (serine 45). At arginine 58 the chain carries ADP-ribosylarginine. At serine 60 the chain carries Phosphoserine; by AURKB. Omega-N-methylarginine is present on arginine 70. Threonine 77 carries the post-translational modification Phosphothreonine; by ROCK1. At serine 81 the chain carries Phosphoserine. One can recognise an IF rod domain in the interval 109 to 417 (EKVELQELND…KLLEGEESRI (309 aa)). Residues 110–142 (KVELQELNDRFANYIEKVRFLEQQNAALAAEVN) form a coil 1A region. The interval 143-152 (RLKGREPTRV) is linker 1. A coil 1B region spans residues 153–253 (AEIYEEELRE…HEEEIRELQA (101 aa)). Residues 254-269 (QLQEQQVQVEMDMSKP) form a linker 12 region. The tract at residues 269-416 (PDLTAALRDI…RKLLEGEESR (148 aa)) is interaction with NEB. The interval 270-288 (DLTAALRDIRAQYETIAAK) is coil 2A. The linker 2 stretch occupies residues 289-296 (NISEAEEW). Phosphoserine occurs at positions 291, 359, 362, and 425. The coil 2B stretch occupies residues 297 to 413 (YKSKVSDLTQ…ATYRKLLEGE (117 aa)). The interval 414–471 (ESRINLPIQTFSALNFRETSPEQRGSEVHTKKTVMIKTIETRDGEVVSEATQQQHEVL) is tail. The interaction with CRYAB stretch occupies residues 439-454 (SEVHTKKTVMIKTIET).

The protein belongs to the intermediate filament family. In terms of assembly, homomer. Interacts with DST. Interacts with MTM1. Interacts with EPPK1; interaction is dependent of higher-order structure of intermediate filament. Interacts with CRYAB. Interacts with NEB (via nebulin repeats 160-164). Interacts (via rod region) with NEBL (via nebulin repeats 1-5). Interacts with ASB2; the interaction targets DES for proteasomal degradation. Interacts with PKP1. Interacts with FLII. ADP-ribosylation prevents ability to form intermediate filaments. In terms of processing, phosphorylation at Ser-7, Ser-28 and Ser-32 by CDK1 and phosphorylation at Ser-60 by AURKB contribute to efficient separation of desmin intermediate filaments during mitosis. Post-translationally, ubiquitination by a SCF-like complex containing ASB2 leads to proteasomal degradation.

It is found in the cytoplasm. It localises to the myofibril. The protein resides in the sarcomere. Its subcellular location is the z line. The protein localises to the cell membrane. It is found in the sarcolemma. It localises to the nucleus. The protein resides in the cell tip. Its subcellular location is the nucleus envelope. Its function is as follows. Muscle-specific type III intermediate filament essential for proper muscular structure and function. Plays a crucial role in maintaining the structure of sarcomeres, inter-connecting the Z-disks and forming the myofibrils, linking them not only to the sarcolemmal cytoskeleton, but also to the nucleus and mitochondria, thus providing strength for the muscle fiber during activity. In adult striated muscle they form a fibrous network connecting myofibrils to each other and to the plasma membrane from the periphery of the Z-line structures. May act as a sarcomeric microtubule-anchoring protein: specifically associates with detyrosinated tubulin-alpha chains, leading to buckled microtubules and mechanical resistance to contraction. Required for nuclear membrane integrity, via anchoring at the cell tip and nuclear envelope, resulting in maintenance of microtubule-derived intracellular mechanical forces. Contributes to the transcriptional regulation of the NKX2-5 gene in cardiac progenitor cells during a short period of cardiomyogenesis and in cardiac side population stem cells in the adult. Plays a role in maintaining an optimal conformation of nebulette (NEB) on heart muscle sarcomeres to bind and recruit cardiac alpha-actin. The chain is Desmin (DES) from Sus scrofa (Pig).